A 189-amino-acid polypeptide reads, in one-letter code: uncharacterized protein (189 aa).

The protein belongs to the OsmC/Ohr family.

This is an uncharacterized protein from Methanocaldococcus jannaschii (strain ATCC 43067 / DSM 2661 / JAL-1 / JCM 10045 / NBRC 100440) (Methanococcus jannaschii).